The primary structure comprises 358 residues: Peptide chain release factor 1 (358 aa).

Gln-236 is subject to N5-methylglutamine.

This sequence belongs to the prokaryotic/mitochondrial release factor family. Methylated by PrmC. Methylation increases the termination efficiency of RF1.

It localises to the cytoplasm. Functionally, peptide chain release factor 1 directs the termination of translation in response to the peptide chain termination codons UAG and UAA. This is Peptide chain release factor 1 from Corynebacterium aurimucosum (strain ATCC 700975 / DSM 44827 / CIP 107346 / CN-1) (Corynebacterium nigricans).